The sequence spans 89 residues: MSLSNETKAKIVADFGRDANDSGSTEVQVALLTAQISHLQGHFSEHKKDHHSRRGLLRMVSQRRKLLDYLKRKDVSRYTGLIARLGLRR.

Belongs to the universal ribosomal protein uS15 family. Part of the 30S ribosomal subunit. Forms a bridge to the 50S subunit in the 70S ribosome, contacting the 23S rRNA.

In terms of biological role, one of the primary rRNA binding proteins, it binds directly to 16S rRNA where it helps nucleate assembly of the platform of the 30S subunit by binding and bridging several RNA helices of the 16S rRNA. Its function is as follows. Forms an intersubunit bridge (bridge B4) with the 23S rRNA of the 50S subunit in the ribosome. In Erwinia tasmaniensis (strain DSM 17950 / CFBP 7177 / CIP 109463 / NCPPB 4357 / Et1/99), this protein is Small ribosomal subunit protein uS15.